Consider the following 308-residue polypeptide: UDP-3-O-acyl-N-acetylglucosamine deacetylase (308 aa).

Zn(2+) contacts are provided by H77, H233, and D237. Catalysis depends on H260, which acts as the Proton donor.

It belongs to the LpxC family. The cofactor is Zn(2+).

It catalyses the reaction a UDP-3-O-[(3R)-3-hydroxyacyl]-N-acetyl-alpha-D-glucosamine + H2O = a UDP-3-O-[(3R)-3-hydroxyacyl]-alpha-D-glucosamine + acetate. Its pathway is glycolipid biosynthesis; lipid IV(A) biosynthesis; lipid IV(A) from (3R)-3-hydroxytetradecanoyl-[acyl-carrier-protein] and UDP-N-acetyl-alpha-D-glucosamine: step 2/6. Its function is as follows. Catalyzes the hydrolysis of UDP-3-O-myristoyl-N-acetylglucosamine to form UDP-3-O-myristoylglucosamine and acetate, the committed step in lipid A biosynthesis. The sequence is that of UDP-3-O-acyl-N-acetylglucosamine deacetylase from Nitratidesulfovibrio vulgaris (strain ATCC 29579 / DSM 644 / CCUG 34227 / NCIMB 8303 / VKM B-1760 / Hildenborough) (Desulfovibrio vulgaris).